The chain runs to 392 residues: MTLLGTALRPAATRVMLLGSGELGKEVAIECQRLGVEVIAVDRYADAPAMHVAHRSHVINMLDGDALRRVVELEKPHYIVPEIEAIATDMLIQLEEEGLNVVPCARATKLTMNREGIRRLAAEELQLPTSTYRFADSENLFREAVAAIGYPCIVKPVMSSSGKGQTFIRSAEQLAHAWEYAQQGGRAGAGRVIVEGVVKFDFEITLLTVSAVDGVHFCAPVGHRQEDGDYRESWQPQQMSPLALERAQEIARKVVLALGGYGLFGVELFVCGDEVIFSEVSPRPHDTGMVTLISQDLSEFALHVRAFLGLPVGGIRQYGPAASAVILPQLTSQNVTFDNVQNAVGADLQIRLFGKPEIDGSRRLGVALATAESVVDAIERAKHAAGQVKVQG.

N(1)-(5-phospho-beta-D-ribosyl)glycinamide-binding positions include 22 to 23 (EL) and glutamate 82. Residues arginine 114, lysine 155, 160 to 165 (SSGKGQ), 195 to 198 (EGVV), and glutamate 203 contribute to the ATP site. An ATP-grasp domain is found at 119 to 308 (RLAAEELQLP…EFALHVRAFL (190 aa)). Mg(2+) contacts are provided by glutamate 267 and glutamate 279. Residues aspartate 286, lysine 355, and 362-363 (RR) contribute to the N(1)-(5-phospho-beta-D-ribosyl)glycinamide site.

It belongs to the PurK/PurT family. In terms of assembly, homodimer.

The enzyme catalyses N(1)-(5-phospho-beta-D-ribosyl)glycinamide + formate + ATP = N(2)-formyl-N(1)-(5-phospho-beta-D-ribosyl)glycinamide + ADP + phosphate + H(+). It participates in purine metabolism; IMP biosynthesis via de novo pathway; N(2)-formyl-N(1)-(5-phospho-D-ribosyl)glycinamide from N(1)-(5-phospho-D-ribosyl)glycinamide (formate route): step 1/1. In terms of biological role, involved in the de novo purine biosynthesis. Catalyzes the transfer of formate to 5-phospho-ribosyl-glycinamide (GAR), producing 5-phospho-ribosyl-N-formylglycinamide (FGAR). Formate is provided by PurU via hydrolysis of 10-formyl-tetrahydrofolate. This is Formate-dependent phosphoribosylglycinamide formyltransferase from Escherichia coli O1:K1 / APEC.